The following is a 209-amino-acid chain: MTTKGILGKKVGMTQVFTESGELVPVTVVEVQPNVVLQVKTVENDGYEAIQLGVDDKREVLTNKPAQGHAAKAKTTPKRFIREIRNVELGDYTVGDEVKADIFAAGDAVDVTGITKGHGYQGNIHKDGQSRGPMAHGSRYHRRPGSMGAIINRVFKGKKLPGRMGNHQRTMQNLQIVRADVENNVLLIKGNVPGANKSFVTVKTSVKSK.

It belongs to the universal ribosomal protein uL3 family. As to quaternary structure, part of the 50S ribosomal subunit. Forms a cluster with proteins L14 and L19.

In terms of biological role, one of the primary rRNA binding proteins, it binds directly near the 3'-end of the 23S rRNA, where it nucleates assembly of the 50S subunit. This chain is Large ribosomal subunit protein uL3, found in Lactiplantibacillus plantarum (strain ATCC BAA-793 / NCIMB 8826 / WCFS1) (Lactobacillus plantarum).